We begin with the raw amino-acid sequence, 119 residues long: MIKLNFSRELRLLTPLHFKYVFEQPFRASTPELTILARPNNLAHPRLGLTVAKKHLKKAHDRNRIKRLCRESFRLAQYKLPNCDFVIVAKQGIGKLDNRTLTQTLDKLWQRHIRLAQKS.

It belongs to the RnpA family. Consists of a catalytic RNA component (M1 or rnpB) and a protein subunit.

It catalyses the reaction Endonucleolytic cleavage of RNA, removing 5'-extranucleotides from tRNA precursor.. In terms of biological role, RNaseP catalyzes the removal of the 5'-leader sequence from pre-tRNA to produce the mature 5'-terminus. It can also cleave other RNA substrates such as 4.5S RNA. The protein component plays an auxiliary but essential role in vivo by binding to the 5'-leader sequence and broadening the substrate specificity of the ribozyme. The chain is Ribonuclease P protein component from Pasteurella multocida (strain Pm70).